Consider the following 206-residue polypeptide: Probable glutathione S-transferase 7 (206 aa).

The 78-residue stretch at 2 to 79 (VHYKVSYFPI…YLARQFGING (78 aa)) folds into the GST N-terminal domain. Glutathione is bound by residues Tyr8, Trp39, Lys43, 49–51 (GQL), and 63–64 (QS). The GST C-terminal domain occupies 81-206 (CAWEEAQVNS…WLETRPVTPF (126 aa)).

This sequence belongs to the GST superfamily. Sigma family.

The enzyme catalyses RX + glutathione = an S-substituted glutathione + a halide anion + H(+). Functionally, conjugation of reduced glutathione to a wide number of exogenous and endogenous hydrophobic electrophiles. May play a role in the detoxification of reactive oxygen species produced during pathogenic bacterial infection. In Caenorhabditis elegans, this protein is Probable glutathione S-transferase 7 (gst-7).